The chain runs to 135 residues: UPF0299 membrane protein Spro_1570 (135 aa).

A run of 4 helical transmembrane segments spans residues 4-24, 30-50, 63-83, and 93-113; these read LFTL…CLFA, ALLP…FALL, GCHL…VGVM, and LGPL…VVGY.

Belongs to the UPF0299 family.

Its subcellular location is the cell inner membrane. The protein is UPF0299 membrane protein Spro_1570 of Serratia proteamaculans (strain 568).